A 124-amino-acid chain; its full sequence is Transcription initiation factor IIA subunit 2 (124 aa).

Belongs to the TFIIA subunit 2 family. TFIIA is a heterodimer composed of the large TOA1 and the small TOA2 subunits.

The protein localises to the nucleus. Functionally, TFIIA is a component of the transcription machinery of RNA polymerase II and plays an important role in transcriptional activation. TFIIA in a complex with tbp mediates transcriptional activity. This chain is Transcription initiation factor IIA subunit 2 (TOA2), found in Cryptococcus neoformans var. neoformans serotype D (strain JEC21 / ATCC MYA-565) (Filobasidiella neoformans).